The following is a 528-amino-acid chain: Light-independent protochlorophyllide reductase subunit B (528 aa).

Residue aspartate 36 participates in [4Fe-4S] cluster binding. Residue aspartate 274 is the Proton donor of the active site. Residue glycine 409 to leucine 410 participates in substrate binding. The interval glycine 429 to alanine 471 is disordered. Low complexity predominate over residues alanine 444 to serine 465.

It belongs to the ChlB/BchB/BchZ family. Protochlorophyllide reductase is composed of three subunits; BchL, BchN and BchB. Forms a heterotetramer of two BchB and two BchN subunits. [4Fe-4S] cluster serves as cofactor.

It carries out the reaction chlorophyllide a + oxidized 2[4Fe-4S]-[ferredoxin] + 2 ADP + 2 phosphate = protochlorophyllide a + reduced 2[4Fe-4S]-[ferredoxin] + 2 ATP + 2 H2O. Its pathway is porphyrin-containing compound metabolism; bacteriochlorophyll biosynthesis (light-independent). In terms of biological role, component of the dark-operative protochlorophyllide reductase (DPOR) that uses Mg-ATP and reduced ferredoxin to reduce ring D of protochlorophyllide (Pchlide) to form chlorophyllide a (Chlide). This reaction is light-independent. The NB-protein (BchN-BchB) is the catalytic component of the complex. In Dinoroseobacter shibae (strain DSM 16493 / NCIMB 14021 / DFL 12), this protein is Light-independent protochlorophyllide reductase subunit B.